Here is a 273-residue protein sequence, read N- to C-terminus: Large ribosomal subunit protein uL2 (273 aa).

2 disordered regions span residues 34 to 54 (LEKKSKSGGRNNNGRITTRHI) and 223 to 273 (VAMN…RRRK).

This sequence belongs to the universal ribosomal protein uL2 family. In terms of assembly, part of the 50S ribosomal subunit. Forms a bridge to the 30S subunit in the 70S ribosome.

In terms of biological role, one of the primary rRNA binding proteins. Required for association of the 30S and 50S subunits to form the 70S ribosome, for tRNA binding and peptide bond formation. It has been suggested to have peptidyltransferase activity; this is somewhat controversial. Makes several contacts with the 16S rRNA in the 70S ribosome. The sequence is that of Large ribosomal subunit protein uL2 from Pseudomonas aeruginosa (strain LESB58).